Consider the following 470-residue polypeptide: Sorting nexin-17 (470 aa).

Residues 1–109 (MHFSIPETES…SFLRRAQQET (109 aa)) enclose the PX domain. Positions 36, 38, 62, and 75 each coordinate a 1,2-diacyl-sn-glycero-3-phospho-(1D-myo-inositol-3-phosphate). The region spanning 115–206 (EEVSLEVLLS…YKIVLRKSYW (92 aa)) is the Ras-associating domain. An FERM-like region spans residues 115-432 (EEVSLEVLLS…DASRESMVKL (318 aa)). The PTB-like F3 module stretch occupies residues 270–432 (GYLRFDACVA…DASRESMVKL (163 aa)). Phosphoserine is present on residues Ser336, Ser407, Ser409, Ser415, Ser421, Ser437, and Ser440. Positions 401-426 (GGTLRRSDSQQAVKSPPLLESPDASR) are disordered.

Belongs to the sorting nexin family. In terms of assembly, monomer. Interacts with APP (via cytoplasmic YXNPXY motif). Interacts with KIF1B. Interacts with the C-termini of P-selectin, PTC, LDLR, VLDLR, LRP1 and LRP8. Interacts with KRIT1 (via N-terminus). Interacts with HRAS. Interacts with ITGB1 and ITGB5 (via NPxY motif). Interacts with CCDC22 and CCDC93; the interaction associates SNX17 with the CCC complex. Interacts (via C-terminus) with VPS26C and VPS35L; the interactions are direct and associate SNX17 with the retriever complex. Detected in brain neurons (at protein level). Broadly expressed, with highest levels in brain and placenta, and lowest levels in colon, intestine and liver.

It localises to the cytoplasm. It is found in the early endosome. Its subcellular location is the cytoplasmic vesicle membrane. Critical regulator of endosomal recycling of numerous surface proteins, including integrins, signaling receptor and channels. Binds to NPxY sequences in the cytoplasmic tails of target cargos. Associates with retriever and CCC complexes to prevent lysosomal degradation and promote cell surface recycling of numerous cargos such as integrins ITGB1, ITGB5 and their associated alpha subunits. Also required for maintenance of normal cell surface levels of APP and LRP1. Interacts with membranes containing phosphatidylinositol 3-phosphate (PtdIns(3P)). The chain is Sorting nexin-17 (Snx17) from Mus musculus (Mouse).